A 104-amino-acid polypeptide reads, in one-letter code: MPSFDPRDLADLVRRPIVTEKATILMEQNKYTFEVIPKASKPEIKAAIEDLFQVKVVKVNTNLPPRKKRRVGKFIGYKPQYKRAIVTVAPGDEDKIRQVLFPEV.

The protein belongs to the universal ribosomal protein uL23 family. Part of the 50S ribosomal subunit. Contacts protein L29, and trigger factor when it is bound to the ribosome.

In terms of biological role, one of the early assembly proteins it binds 23S rRNA. One of the proteins that surrounds the polypeptide exit tunnel on the outside of the ribosome. Forms the main docking site for trigger factor binding to the ribosome. This chain is Large ribosomal subunit protein uL23, found in Nostoc punctiforme (strain ATCC 29133 / PCC 73102).